The primary structure comprises 479 residues: PTS system glucose-specific EIICB component (479 aa).

Residues 1-388 (MFKNAFSNLQ…FNLKTPGREK (388 aa)) enclose the PTS EIIC type-1 domain. Helical transmembrane passes span 15 to 35 (SLML…IGSA), 51 to 71 (AGSS…ALGF), 80 to 100 (LAAV…IPIF), 112 to 132 (YLLD…AYIF), 152 to 172 (FVPI…SIIW), 252 to 272 (GGFI…WHCA), 280 to 300 (IGGI…TEPI), 305 to 325 (ILVA…AFPI), and 356 to 376 (LFPI…YFMI). A PTS EIIB type-1 domain is found at 399-479 (KETALLVISI…IDNYMSNTNQ (81 aa)). Cys-421 functions as the Phosphocysteine intermediate; for EIIB activity in the catalytic mechanism. Phosphocysteine is present on Cys-421.

It is found in the cell inner membrane. The enzyme catalyses N(pros)-phospho-L-histidyl-[protein] + D-glucose(out) = D-glucose 6-phosphate(in) + L-histidyl-[protein]. Its function is as follows. The phosphoenolpyruvate-dependent sugar phosphotransferase system (sugar PTS), a major carbohydrate active transport system, catalyzes the phosphorylation of incoming sugar substrates concomitantly with their translocation across the cell membrane. The enzyme II complex composed of PtsG and Crr is involved in glucose transport. The chain is PTS system glucose-specific EIICB component (ptsG) from Buchnera aphidicola subsp. Baizongia pistaciae (strain Bp).